The primary structure comprises 461 residues: Sensor histidine kinase MctS (461 aa).

A run of 2 helical transmembrane segments spans residues 7–27 and 203–223; these read IIAL…TFIT and FVIV…TCML. H259 carries the phosphohistidine; by autocatalysis modification. The Histidine kinase domain maps to 360-450; sequence LYRVAQEAFN…TLTAMMPKSA (91 aa).

The protein resides in the cell membrane. The catalysed reaction is ATP + protein L-histidine = ADP + protein N-phospho-L-histidine.. Member of the two-component regulatory system MctS/MctR, which activates mctP expression. In Rhizobium johnstonii (strain DSM 114642 / LMG 32736 / 3841) (Rhizobium leguminosarum bv. viciae), this protein is Sensor histidine kinase MctS.